A 348-amino-acid chain; its full sequence is Protein RecA (348 aa).

65–72 (GPESSGKT) contacts ATP.

It belongs to the RecA family.

It localises to the cytoplasm. In terms of biological role, can catalyze the hydrolysis of ATP in the presence of single-stranded DNA, the ATP-dependent uptake of single-stranded DNA by duplex DNA, and the ATP-dependent hybridization of homologous single-stranded DNAs. It interacts with LexA causing its activation and leading to its autocatalytic cleavage. The chain is Protein RecA from Enterococcus gallinarum.